Reading from the N-terminus, the 320-residue chain is Ferrochelatase (320 aa).

Fe cation-binding residues include His194 and Glu275.

This sequence belongs to the ferrochelatase family. Monomer.

It localises to the cytoplasm. It carries out the reaction heme b + 2 H(+) = protoporphyrin IX + Fe(2+). It functions in the pathway porphyrin-containing compound metabolism; protoheme biosynthesis; protoheme from protoporphyrin-IX: step 1/1. Catalyzes the ferrous insertion into protoporphyrin IX. This is Ferrochelatase from Escherichia coli O9:H4 (strain HS).